A 296-amino-acid chain; its full sequence is MKFVGAHVSASGGVDNAPLNAMAIGAKAFAVFAKNQRQWVAKPLEEKTIEAFKKNLETAGILPKHVLPHDSYLINLGHPEEEKLEKSRAAFIDELERCNQLGLDKLNFHPGSHLVKIPKKDPEYHEKLMEAELHCLDVIAESMNLAIEATKGSDVKLVIENTAGQGTNLGYKFEHLAHLIEKVEDKSRVGVCLDTCHTFTAGYDLRTREAYDETMDAFERIVGFEYLMGMHINDSKPKLGSRVDRHASLGQGEIGWDAFCFIMNDPRMDDIPLILETIDESLWPEEIKALYALVKK.

Residues His-69, His-109, Glu-160, Asp-194, His-197, His-231, Asp-244, His-246, and Glu-276 each contribute to the Zn(2+) site.

This sequence belongs to the AP endonuclease 2 family. Requires Zn(2+) as cofactor.

It carries out the reaction Endonucleolytic cleavage to 5'-phosphooligonucleotide end-products.. Its function is as follows. Endonuclease IV plays a role in DNA repair. It cleaves phosphodiester bonds at apurinic or apyrimidinic (AP) sites, generating a 3'-hydroxyl group and a 5'-terminal sugar phosphate. This Sulfurovum sp. (strain NBC37-1) protein is Probable endonuclease 4.